Reading from the N-terminus, the 293-residue chain is GTPase Era (293 aa).

One can recognise an Era-type G domain in the interval 5-174 (RTISVCIIGR…ITGKAQIAPW (170 aa)). Residues 13-20 (GRPNSGKS) are G1. Residue 13-20 (GRPNSGKS) participates in GTP binding. Residues 39–43 (QTTRS) form a G2 region. The interval 60–63 (DTPG) is G3. GTP is bound by residues 60-64 (DTPGI) and 122-125 (NKID). The interval 122–125 (NKID) is G4. The tract at residues 150 to 152 (ISA) is G5. A KH type-2 domain is found at 202–279 (LQQELPYKLT…HLFLFVKVHE (78 aa)).

This sequence belongs to the TRAFAC class TrmE-Era-EngA-EngB-Septin-like GTPase superfamily. Era GTPase family. As to quaternary structure, monomer.

It localises to the cytoplasm. The protein localises to the cell inner membrane. Functionally, an essential GTPase that binds both GDP and GTP, with rapid nucleotide exchange. Plays a role in 16S rRNA processing and 30S ribosomal subunit biogenesis and possibly also in cell cycle regulation and energy metabolism. In Rickettsia akari (strain Hartford), this protein is GTPase Era.